Here is a 270-residue protein sequence, read N- to C-terminus: Phospholysine phosphohistidine inorganic pyrophosphate phosphatase (270 aa).

2 residues coordinate Mg(2+): aspartate 14 and serine 16. Residues 14 to 16 (DVS), 52 to 53 (TN), and lysine 187 each bind substrate. A Mg(2+)-binding site is contributed by aspartate 212.

This sequence belongs to the HAD-like hydrolase superfamily. The cofactor is Mg(2+).

It is found in the cytoplasm. The protein resides in the nucleus. It catalyses the reaction diphosphate + H2O = 2 phosphate + H(+). Phosphatase that hydrolyzes imidodiphosphate, 3-phosphohistidine and 6-phospholysine. Has broad substrate specificity and can also hydrolyze inorganic diphosphate, but with lower efficiency. The sequence is that of Phospholysine phosphohistidine inorganic pyrophosphate phosphatase (lhpp) from Xenopus laevis (African clawed frog).